The sequence spans 160 residues: Interleukin-36 alpha (160 aa).

A propeptide spanning residues 1 to 7 (MNKEKEL) is cleaved from the precursor. The residue at position 98 (Y98) is a 3'-nitrotyrosine.

It belongs to the IL-1 family. As to quaternary structure, interacts with TMED10; the interaction mediates the translocation from the cytoplasm into the ERGIC (endoplasmic reticulum-Golgi intermediate compartment) and thereby secretion. In terms of processing, N-terminal truncation leads to a dramatic enhancement of its activity (&gt;1000-fold). As to expression, highly expressed in embryonic tissue and in tissues containing epithelial cells. Elevated expression levels are detected in chronic kidney disease; expressed inepithelia from the distal convoluted tubules (DCTs) to the cortical collecting ducts (CCDs) in single nephrons (at protein level).

The protein resides in the cytoplasm. Its subcellular location is the secreted. In terms of biological role, cytokine that binds to and signals through the IL1RL2/IL-36R receptor which in turn activates NF-kappa-B and MAPK signaling pathways in target cells linked to a pro-inflammatory response. Part of the IL-36 signaling system that is thought to be present in epithelial barriers and to take part in local inflammatory response; similar to the IL-1 system with which it shares the coreceptor IL1RAP. Seems to be involved in skin inflammatory response by acting on keratinocytes, dendritic cells and indirectly on T-cells to drive tissue infiltration, cell maturation and cell proliferation. Induces the production of pro-inflammatory cytokines, including IL-12, Il-1 beta, IL-6, TNF-alpha and IL-23 in bone marrow-derived dendritic cells (BMDCs). Involved in dendritic cell maturation by stimulating the surface expression of CD80, CD86 and MHC class II. Induces the production of IFN-gamma, IL-4 and IL-17 by cultured CD4(+) T-cells and splenocytes. May play a role in pro-inflammatory effects in the lung: induces the expression of CXCL1 and CXCL2 in the lung, and the expression of TNF-alpha, IL-36c, IL-1A, IL-1B, CXCL1 and CXCL2 in isolated splenic CD11c(+) alveolar macrophages. May be involved in T-cell maturation by stimulating the surface expression of CD40 and modestly CD80 and CD86 in splenic CD11c(+) cells. May be involved in CD4(+) T-cell proliferation. Induces NF-kappa B activation in macrophages. The sequence is that of Interleukin-36 alpha from Mus musculus (Mouse).